Here is a 203-residue protein sequence, read N- to C-terminus: Dephospho-CoA kinase (203 aa).

Residues 6–203 (KVAITGGLSC…ELYQELKIYI (198 aa)) enclose the DPCK domain. ATP is bound at residue 14–19 (SCGKSS).

The protein belongs to the CoaE family.

The protein localises to the cytoplasm. It catalyses the reaction 3'-dephospho-CoA + ATP = ADP + CoA + H(+). Its pathway is cofactor biosynthesis; coenzyme A biosynthesis; CoA from (R)-pantothenate: step 5/5. Functionally, catalyzes the phosphorylation of the 3'-hydroxyl group of dephosphocoenzyme A to form coenzyme A. The polypeptide is Dephospho-CoA kinase (Protochlamydia amoebophila (strain UWE25)).